The primary structure comprises 104 residues: uncharacterized protein (104 aa).

The next 2 membrane-spanning stretches (helical) occupy residues 53–73 (IWGI…NWDF) and 74–94 (ILNL…LILI).

Its subcellular location is the cell membrane. This is an uncharacterized protein from Methanocaldococcus jannaschii (strain ATCC 43067 / DSM 2661 / JAL-1 / JCM 10045 / NBRC 100440) (Methanococcus jannaschii).